We begin with the raw amino-acid sequence, 127 residues long: Fluoride-specific ion channel FluC (127 aa).

4 helical membrane passes run 4 to 24, 37 to 57, 68 to 88, and 96 to 116; these read SLLVIAIGASLGAWLRWLLGM, TVVANMVGGYIIGLAIAFLAA, LIITGFCGGLTTFSTFSAETV, and LLWALGSISLHVVGSLAMTAA. Residues glycine 75 and threonine 78 each contribute to the Na(+) site.

The protein belongs to the fluoride channel Fluc/FEX (TC 1.A.43) family.

The protein resides in the cell inner membrane. It catalyses the reaction fluoride(in) = fluoride(out). With respect to regulation, na(+) is not transported, but it plays an essential structural role and its presence is essential for fluoride channel function. In terms of biological role, fluoride-specific ion channel. Important for reducing fluoride concentration in the cell, thus reducing its toxicity. This chain is Fluoride-specific ion channel FluC, found in Pseudomonas syringae pv. maculicola.